Here is a 190-residue protein sequence, read N- to C-terminus: MSADAPEPGPGQSPGERASGGPEPSGVDLARVALRAAREAARARGDAAQQKKQARRGGLRSGARADGRDPMALGSAINRLITERGWETPAAVGGVMGRWPEIVGADVAKHCVPERYDEDERVLVVRCDSTAWATNLRLLAPTLVARLNEDLGHGSVRMIKVLGPGGPGGPGRRYGPLRAPGSQGPGDTYG.

Disordered stretches follow at residues 1–70 (MSAD…GRDP) and 163–190 (GPGG…DTYG). A compositionally biased stretch (low complexity) spans 26–35 (GVDLARVALR). The span at 36 to 45 (AAREAARARG) shows a compositional bias: basic and acidic residues. The span at 163 to 172 (GPGGPGGPGR) shows a compositional bias: gly residues.

The protein belongs to the UPF0232 family.

The sequence is that of UPF0232 protein SCO3875 from Streptomyces coelicolor (strain ATCC BAA-471 / A3(2) / M145).